Here is a 203-residue protein sequence, read N- to C-terminus: Molybdenum cofactor guanylyltransferase (203 aa).

Residues 12-14 (LAG), Lys-25, Asn-53, Asp-71, and Asp-101 each bind GTP. A Mg(2+)-binding site is contributed by Asp-101.

The protein belongs to the MobA family. In terms of assembly, monomer. It depends on Mg(2+) as a cofactor.

It localises to the cytoplasm. It catalyses the reaction Mo-molybdopterin + GTP + H(+) = Mo-molybdopterin guanine dinucleotide + diphosphate. Its function is as follows. Transfers a GMP moiety from GTP to Mo-molybdopterin (Mo-MPT) cofactor (Moco or molybdenum cofactor) to form Mo-molybdopterin guanine dinucleotide (Mo-MGD) cofactor. The chain is Molybdenum cofactor guanylyltransferase from Methylibium petroleiphilum (strain ATCC BAA-1232 / LMG 22953 / PM1).